An 846-amino-acid polypeptide reads, in one-letter code: Protein kintoun (846 aa).

Disordered stretches follow at residues 1–21 (MSTA…ERAD), 377–412 (DSGV…PPDP), 581–657 (HTSI…DSTI), and 743–846 (HDSS…DDEI). S378 is modified (phosphoserine). Residues 399–408 (PETPELETAA) show a composition bias toward low complexity. 2 stretches are compositionally biased toward basic residues: residues 596–612 (LHKK…KKQR) and 750–766 (QRKK…RAQQ). S770 bears the Phosphoserine mark. Residues 821 to 832 (TRQDHADADAKN) show a composition bias toward basic and acidic residues.

It belongs to the PIH1 family. Kintoun subfamily. As to quaternary structure, interacts with Pp1alpha-96A, Pp1-87B, Pp1-13C and flw.

It localises to the cytoplasm. Functionally, required for cytoplasmic pre-assembly of axonemal dyneins, thereby playing a central role in motility in cilia and flagella. Involved in pre-assembly of dynein arm complexes in the cytoplasm before intraflagellar transport loads them for the ciliary compartment. In Drosophila pseudoobscura pseudoobscura (Fruit fly), this protein is Protein kintoun.